The primary structure comprises 184 residues: MKNVTDSFVSLGYWPSAGSFGFNTDILATNLINLSVVLGVLIFFGKGVLSDLLDNRKQRILSTIRNSEELREGAIEQLEKARARLRKVEMEADEFRVNGYSEIEREKQNLINATYENLERLENYKNETIHFEEQRAINQVRQRVFQQALQGALGTLNSCSNSELHLRTISANIGVLGAMKEITD.

Residues 27–49 (LATNLINLSVVLGVLIFFGKGVL) form a helical membrane-spanning segment.

Belongs to the ATPase B chain family. In terms of assembly, F-type ATPases have 2 components, F(1) - the catalytic core - and F(0) - the membrane proton channel. F(1) has five subunits: alpha(3), beta(3), gamma(1), delta(1), epsilon(1). F(0) has four main subunits: a(1), b(1), b'(1) and c(10-14). The alpha and beta chains form an alternating ring which encloses part of the gamma chain. F(1) is attached to F(0) by a central stalk formed by the gamma and epsilon chains, while a peripheral stalk is formed by the delta, b and b' chains.

The protein localises to the plastid. It is found in the chloroplast thylakoid membrane. F(1)F(0) ATP synthase produces ATP from ADP in the presence of a proton or sodium gradient. F-type ATPases consist of two structural domains, F(1) containing the extramembraneous catalytic core and F(0) containing the membrane proton channel, linked together by a central stalk and a peripheral stalk. During catalysis, ATP synthesis in the catalytic domain of F(1) is coupled via a rotary mechanism of the central stalk subunits to proton translocation. Functionally, component of the F(0) channel, it forms part of the peripheral stalk, linking F(1) to F(0). The sequence is that of ATP synthase subunit b, chloroplastic from Liriodendron tulipifera (Tuliptree).